Consider the following 330-residue polypeptide: Ferric enterobactin transport system permease protein FepG (330 aa).

At 1-7 the chain is on the periplasmic side; it reads MIYVSRR. The chain crosses the membrane as a helical span at residues 8–28; sequence LLITCLLLVSACVVAGIWGLR. The Cytoplasmic segment spans residues 29–62; the sequence is SGAVTLETSQVFAALMGDAPRSMTMVVTEWRLPR. The helical transmembrane segment at 63–83 threads the bilayer; that stretch reads VLMALLIGAALGVSGAIFQSL. At 84–92 the chain is on the periplasmic side; the sequence is MRNPLGSPD. A helical membrane pass occupies residues 93–113; the sequence is VMGFNTGAWSGVLVAMVLFGQ. Topologically, residues 114 to 117 are cytoplasmic; that stretch reads DLTA. The helical transmembrane segment at 118–138 threads the bilayer; that stretch reads IALSAMVGGIVTSLLVWLLAW. At 139 to 146 the chain is on the periplasmic side; that stretch reads RNGIDTFR. The chain crosses the membrane as a helical span at residues 147-167; that stretch reads LIIIGIGVRAMLVAFNTWLLL. The Cytoplasmic portion of the chain corresponds to 168 to 190; sequence KASLETALTAGLWNAGSLNGLTW. Residues 191–211 traverse the membrane as a helical segment; sequence AKTSPSAPIIILMLIAAALLV. Residues 212–235 are Periplasmic-facing; that stretch reads RRMRLLEMGDDTACALGVSVERSR. The chain crosses the membrane as a helical span at residues 236–256; the sequence is LLMMLVAVVLTAAATALAGPI. The Cytoplasmic segment spans residues 257 to 275; it reads SFIALVAPHIARRISGTAR. Residues 276–296 traverse the membrane as a helical segment; the sequence is WGLTQAALCGALLLLAADLCA. Residues 297–303 are Periplasmic-facing; the sequence is QQLFMPY. The helical transmembrane segment at 304–324 threads the bilayer; it reads QLPVGVVTVSLGGIYLIVLLI. Over 325-330 the chain is Cytoplasmic; that stretch reads QESRKK.

It belongs to the binding-protein-dependent transport system permease family. FecCD subfamily. As to quaternary structure, the complex is composed of two ATP-binding proteins (FepC), two transmembrane proteins (FepD and FepG) and a solute-binding protein (FepB).

The protein resides in the cell inner membrane. Functionally, part of the ABC transporter complex FepBDGC involved in ferric enterobactin uptake. Responsible for the translocation of the substrate across the membrane. The chain is Ferric enterobactin transport system permease protein FepG (fepG) from Escherichia coli (strain K12).